The sequence spans 312 residues: Putative electron transfer flavoprotein subunit YdiR (312 aa).

254–282 (LYLTLGISGQIQHMVGGNGAKVIVAINKD) lines the FAD pocket.

The protein belongs to the ETF alpha-subunit/FixB family. As to quaternary structure, ydiR and YdiQ form a heterodimer.

May play a role in a redox process. In Escherichia coli (strain K12), this protein is Putative electron transfer flavoprotein subunit YdiR (ydiR).